The sequence spans 366 residues: Ribosomal RNA large subunit methyltransferase M (366 aa).

Residues Ser188, 221-224 (CPGG), Asp240, Asp260, and Asp277 each bind S-adenosyl-L-methionine. Lys306 functions as the Proton acceptor in the catalytic mechanism.

The protein belongs to the class I-like SAM-binding methyltransferase superfamily. RNA methyltransferase RlmE family. RlmM subfamily. As to quaternary structure, monomer.

It is found in the cytoplasm. It carries out the reaction cytidine(2498) in 23S rRNA + S-adenosyl-L-methionine = 2'-O-methylcytidine(2498) in 23S rRNA + S-adenosyl-L-homocysteine + H(+). Its function is as follows. Catalyzes the 2'-O-methylation at nucleotide C2498 in 23S rRNA. This is Ribosomal RNA large subunit methyltransferase M from Salmonella paratyphi C (strain RKS4594).